We begin with the raw amino-acid sequence, 100 residues long: Mitochondrial import inner membrane translocase subunit Tim10 B (100 aa).

The Twin CX3C motif signature appears at 25 to 49 (CFQRCVPSLHHRALDAEEEACLHSC). Intrachain disulfides connect Cys-25-Cys-49 and Cys-29-Cys-45.

It belongs to the small Tim family. Component of the TIM22 complex, which core is composed of TIMM22, associated with TIMM10 (TIMM10A and/or TIMM10B), TIMM9, AGK and TIMM29.

It localises to the mitochondrion inner membrane. In terms of biological role, component of the TIM22 complex, a complex that mediates the import and insertion of multi-pass transmembrane proteins into the mitochondrial inner membrane. The TIM22 complex forms a twin-pore translocase that uses the membrane potential as the external driving force. In the TIM22 complex, it may act as a docking point for the soluble 70 kDa complex that guides the target proteins in transit through the aqueous mitochondrial intermembrane space. The polypeptide is Mitochondrial import inner membrane translocase subunit Tim10 B (Timm10b) (Rattus norvegicus (Rat)).